A 207-amino-acid polypeptide reads, in one-letter code: Uracil phosphoribosyltransferase (207 aa).

5-phospho-alpha-D-ribose 1-diphosphate is bound by residues arginine 77, arginine 102, and 129–137 (DPMLATGGS). Residues isoleucine 192 and 197-199 (GDA) each bind uracil. A 5-phospho-alpha-D-ribose 1-diphosphate-binding site is contributed by aspartate 198.

This sequence belongs to the UPRTase family. Mg(2+) serves as cofactor.

The enzyme catalyses UMP + diphosphate = 5-phospho-alpha-D-ribose 1-diphosphate + uracil. Its pathway is pyrimidine metabolism; UMP biosynthesis via salvage pathway; UMP from uracil: step 1/1. Allosterically activated by GTP. In terms of biological role, catalyzes the conversion of uracil and 5-phospho-alpha-D-ribose 1-diphosphate (PRPP) to UMP and diphosphate. This Mycobacterium marinum (strain ATCC BAA-535 / M) protein is Uracil phosphoribosyltransferase.